A 432-amino-acid chain; its full sequence is Interleukin-11 receptor subunit alpha-1 (432 aa).

A signal peptide spans 1–23 (MSSSCSGLTRVLVAVATALVSSS). The Extracellular segment spans residues 24–372 (SPCPQAWGPP…DPLEQVAVLA (349 aa)). In terms of domain architecture, Ig-like C2-type spans 27–110 (PQAWGPPGVQ…SGGMVTLKLG (84 aa)). Intrachain disulfides connect C48–C94, C120–C130, and C170–C180. Fibronectin type-III domains lie at 112–219 (PPAR…LRPD) and 220–317 (PPQG…TPST). An N-linked (GlcNAc...) asparagine glycan is attached at N127. The interval 151–170 (KTLPGAESQRESPSTGPWPC) is disordered. N194 carries an N-linked (GlcNAc...) asparagine glycan. The WSXWS motif signature appears at 304 to 308 (WSAWS). 2 disordered regions span residues 309–332 (PEAWGTPSTGPLQDEIPDWSQGHG) and 342–361 (EDSPAPARPSLQPDPRPLDH). A helical transmembrane segment spans residues 373–393 (SLGIFSCLGLAVGALALGLWL). Topologically, residues 394 to 432 (RLRRSGKDGPQKPGLLAPMIPVEKLPGIPNLQRTPENFS) are cytoplasmic.

The protein belongs to the type I cytokine receptor family. Type 3 subfamily. On IL11 binding, forms a multimer complex with IL6ST/gp130. In terms of processing, a short soluble form is also released from the membrane by proteolysis. The sIL11RA is formed either by limited proteolysis of membrane-bound receptors, a process referred to as ectodomain shedding, or directly secreted from the cells after alternative mRNA splicing. mIL11RA is cleaved by the proteases ADAM10, ELANE and PRTN3. In terms of tissue distribution, widely expressed in all adult tissues and in embryos. Highest levels in kidney, skeletal muscle and embryo.

The protein resides in the membrane. Its subcellular location is the secreted. Functionally, receptor for interleukin-11. The receptor systems for IL6, LIF, OSM, CNTF, IL11 and CT1 can utilize IL6ST for initiating signal transmission. The IL11/IL11RA/IL6ST complex may be involved in the control of proliferation and/or differentiation of skeletogenic progenitor or other mesenchymal cells. Essential for the normal development of craniofacial bones and teeth. Soluble form of IL11 receptor (sIL11RA) that acts as an agonist of IL11 activity. The IL11:sIL11RA complex binds to IL6ST/gp130 on cell surfaces and induces signaling also on cells that do not express membrane-bound IL11RA in a process called IL11 trans-signaling. The sequence is that of Interleukin-11 receptor subunit alpha-1 from Mus musculus (Mouse).